Reading from the N-terminus, the 357-residue chain is 3-isopropylmalate dehydrogenase (357 aa).

Residue 77–90 (GPKWDNLEGSKRPE) coordinates NAD(+). Substrate contacts are provided by arginine 97, arginine 107, arginine 136, and aspartate 224. Residues aspartate 224, aspartate 248, and aspartate 252 each coordinate Mg(2+). Residue 282–294 (GSAPDIAGLDIAN) participates in NAD(+) binding.

Belongs to the isocitrate and isopropylmalate dehydrogenases family. LeuB type 1 subfamily. As to quaternary structure, homodimer. The cofactor is Mg(2+). Mn(2+) is required as a cofactor.

It localises to the cytoplasm. It carries out the reaction (2R,3S)-3-isopropylmalate + NAD(+) = 4-methyl-2-oxopentanoate + CO2 + NADH. It functions in the pathway amino-acid biosynthesis; L-leucine biosynthesis; L-leucine from 3-methyl-2-oxobutanoate: step 3/4. In terms of biological role, catalyzes the oxidation of 3-carboxy-2-hydroxy-4-methylpentanoate (3-isopropylmalate) to 3-carboxy-4-methyl-2-oxopentanoate. The product decarboxylates to 4-methyl-2 oxopentanoate. This chain is 3-isopropylmalate dehydrogenase (leuB), found in Clostridium pasteurianum.